Here is a 636-residue protein sequence, read N- to C-terminus: Interleukin-27 receptor subunit alpha (636 aa).

The signal sequence occupies residues 1–32 (MRGGRGAPFWLWPLPKLALLPLLWVLFQRTRP). Residues 33-516 (QGSAGPLQCY…HLPDNTLRWK (484 aa)) are Extracellular-facing. 2 N-linked (GlcNAc...) asparagine glycosylation sites follow: asparagine 51 and asparagine 76. One can recognise a Fibronectin type-III 1 domain in the interval 131-231 (PRLGPDVDFS…PILSFQTPPS (101 aa)). A WSXWS motif motif is present at residues 217–221 (WGEWS). Residues asparagine 302, asparagine 311, asparagine 374, asparagine 382, and asparagine 467 are each glycosylated (N-linked (GlcNAc...) asparagine). 2 Fibronectin type-III domains span residues 322 to 417 (APRS…LAPL) and 419 to 511 (GPTL…LPDN). A helical membrane pass occupies residues 517–537 (VLPGILFLWGLFLLGCGLSLA). Residues 538 to 636 (TSGRCYHLRH…LGPPRPQVLA (99 aa)) lie on the Cytoplasmic side of the membrane. Residues 554-562 (VWEKVPDPA) carry the Box 1 motif motif. A disordered region spans residues 587–636 (EVEEMEPPPVMESSQPAQATAPLDSGYEKHFLPTPEELGLLGPPRPQVLA). Positions 618-628 (LPTPEELGLLG) are enriched in low complexity.

Belongs to the type I cytokine receptor family. Type 2 subfamily. In terms of assembly, component of a receptor complex composed of IL6ST/GP130, IL27RA/WSX1 and CNTFR which interacts with the neuroprotective peptide humanin. As to expression, highly expressed in lymphoid tissues such as spleen, lymph nodes and peripheral blood leukocytes. Weakly expressed in other tissues examined including heart, brain, fetal and adult lung, liver, skeletal muscle, kidney, pancreas, prostate, testis, ovary, small intestine, kidney and colon. In the lymphoid system, higher level expression in CD4+ T-cell subsets than in CD8+ T-cell subsets. Also weaker expression in CD19+ B-cells and monocytes.

It is found in the membrane. Its function is as follows. Receptor for IL27. Requires IL6ST/GP130 to mediate signal transduction in response to IL27. This signaling system acts through STAT3 and STAT1. Acts as a receptor for the neuroprotective peptide humanin as part of a complex with IL6ST/GP130 and CNTFR. Involved in the regulation of Th1-type immune responses. Also appears to be involved in innate defense mechanisms. The chain is Interleukin-27 receptor subunit alpha (IL27RA) from Homo sapiens (Human).